A 726-amino-acid chain; its full sequence is Procollagen-lysine,2-oxoglutarate 5-dioxygenase 1 (726 aa).

Positions 1-18 (MRLLLLLAPLGWLLLAET) are cleaved as a signal peptide. Residues asparagine 196 and asparagine 537 are each glycosylated (N-linked (GlcNAc...) asparagine). One can recognise a Fe2OG dioxygenase domain in the interval 635–726 (QFDLAFVVRY…RYIAVSFVDP (92 aa)). 2 residues coordinate Fe cation: histidine 655 and aspartate 657. N-linked (GlcNAc...) asparagine glycosylation occurs at asparagine 685. Histidine 707 contributes to the Fe cation binding site. The active site involves arginine 717.

As to quaternary structure, homodimer. Identified in a complex with P3H3 and P3H4. The cofactor is Fe(2+). Requires L-ascorbate as cofactor.

It localises to the rough endoplasmic reticulum membrane. It carries out the reaction L-lysyl-[collagen] + 2-oxoglutarate + O2 = (5R)-5-hydroxy-L-lysyl-[collagen] + succinate + CO2. In terms of biological role, part of a complex composed of PLOD1, P3H3 and P3H4 that catalyzes hydroxylation of lysine residues in collagen alpha chains and is required for normal assembly and cross-linkling of collagen fibrils. Forms hydroxylysine residues in -Xaa-Lys-Gly- sequences in collagens. These hydroxylysines serve as sites of attachment for carbohydrate units and are essential for the stability of the intermolecular collagen cross-links. The chain is Procollagen-lysine,2-oxoglutarate 5-dioxygenase 1 (PLOD1) from Bos taurus (Bovine).